The following is a 166-amino-acid chain: Protein SprT (166 aa).

The SprT-like domain occupies 20-164 (EHLANANRKL…CVRCGDLLVA (145 aa)). Position 78 (histidine 78) interacts with Zn(2+). Glutamate 79 is a catalytic residue. Histidine 82 is a binding site for Zn(2+).

This sequence belongs to the SprT family. The cofactor is Zn(2+).

The protein resides in the cytoplasm. The chain is Protein SprT from Klebsiella pneumoniae subsp. pneumoniae (strain ATCC 700721 / MGH 78578).